We begin with the raw amino-acid sequence, 315 residues long: 4-hydroxy-3-methylbut-2-enyl diphosphate reductase (315 aa).

C12 is a [4Fe-4S] cluster binding site. (2E)-4-hydroxy-3-methylbut-2-enyl diphosphate contacts are provided by H41 and H74. Residues H41 and H74 each coordinate dimethylallyl diphosphate. Isopentenyl diphosphate-binding residues include H41 and H74. [4Fe-4S] cluster is bound at residue C96. H124 contacts (2E)-4-hydroxy-3-methylbut-2-enyl diphosphate. H124 serves as a coordination point for dimethylallyl diphosphate. Residue H124 coordinates isopentenyl diphosphate. Residue E126 is the Proton donor of the active site. Residue T168 participates in (2E)-4-hydroxy-3-methylbut-2-enyl diphosphate binding. Residue C198 participates in [4Fe-4S] cluster binding. Residues S226, S227, N228, and S270 each coordinate (2E)-4-hydroxy-3-methylbut-2-enyl diphosphate. Residues S226, S227, N228, and S270 each coordinate dimethylallyl diphosphate. Isopentenyl diphosphate is bound by residues S226, S227, N228, and S270.

It belongs to the IspH family. The cofactor is [4Fe-4S] cluster.

It catalyses the reaction isopentenyl diphosphate + 2 oxidized [2Fe-2S]-[ferredoxin] + H2O = (2E)-4-hydroxy-3-methylbut-2-enyl diphosphate + 2 reduced [2Fe-2S]-[ferredoxin] + 2 H(+). The catalysed reaction is dimethylallyl diphosphate + 2 oxidized [2Fe-2S]-[ferredoxin] + H2O = (2E)-4-hydroxy-3-methylbut-2-enyl diphosphate + 2 reduced [2Fe-2S]-[ferredoxin] + 2 H(+). Its pathway is isoprenoid biosynthesis; dimethylallyl diphosphate biosynthesis; dimethylallyl diphosphate from (2E)-4-hydroxy-3-methylbutenyl diphosphate: step 1/1. It functions in the pathway isoprenoid biosynthesis; isopentenyl diphosphate biosynthesis via DXP pathway; isopentenyl diphosphate from 1-deoxy-D-xylulose 5-phosphate: step 6/6. Catalyzes the conversion of 1-hydroxy-2-methyl-2-(E)-butenyl 4-diphosphate (HMBPP) into a mixture of isopentenyl diphosphate (IPP) and dimethylallyl diphosphate (DMAPP). Acts in the terminal step of the DOXP/MEP pathway for isoprenoid precursor biosynthesis. In Pseudomonas syringae pv. syringae (strain B728a), this protein is 4-hydroxy-3-methylbut-2-enyl diphosphate reductase.